The chain runs to 321 residues: NADH-quinone oxidoreductase subunit H (321 aa).

A run of 8 helical transmembrane segments spans residues 9-29 (LLAI…GAYM), 78-98 (IIFT…FAIM), 111-131 (IGIL…LLGG), 156-176 (FLGL…ISTI), 183-203 (IWNI…GLAI), 234-254 (FFIG…TLFF), 262-282 (LPPY…FILI), and 296-316 (ILGW…TAIV).

The protein belongs to the complex I subunit 1 family. As to quaternary structure, NDH-1 is composed of 14 different subunits. Subunits NuoA, H, J, K, L, M, N constitute the membrane sector of the complex.

The protein resides in the cell membrane. It carries out the reaction a quinone + NADH + 5 H(+)(in) = a quinol + NAD(+) + 4 H(+)(out). Its function is as follows. NDH-1 shuttles electrons from NADH, via FMN and iron-sulfur (Fe-S) centers, to quinones in the respiratory chain. The immediate electron acceptor for the enzyme in this species is believed to be ubiquinone. Couples the redox reaction to proton translocation (for every two electrons transferred, four hydrogen ions are translocated across the cytoplasmic membrane), and thus conserves the redox energy in a proton gradient. This subunit may bind ubiquinone. The sequence is that of NADH-quinone oxidoreductase subunit H from Baumannia cicadellinicola subsp. Homalodisca coagulata.